Reading from the N-terminus, the 159-residue chain is Small ribosomal subunit protein uS19 (159 aa).

The protein belongs to the universal ribosomal protein uS19 family.

In terms of biological role, protein S19 forms a complex with S13 that binds strongly to the 16S ribosomal RNA. This is Small ribosomal subunit protein uS19 from Pyrobaculum arsenaticum (strain DSM 13514 / JCM 11321 / PZ6).